The sequence spans 119 residues: Phosphoribosyl-AMP cyclohydrolase (119 aa).

A Mg(2+)-binding site is contributed by Asp-77. Cys-78 contributes to the Zn(2+) binding site. 2 residues coordinate Mg(2+): Asp-79 and Asp-81. Zn(2+) is bound by residues Cys-94 and Cys-101.

Belongs to the PRA-CH family. As to quaternary structure, homodimer. Mg(2+) serves as cofactor. It depends on Zn(2+) as a cofactor.

Its subcellular location is the cytoplasm. It carries out the reaction 1-(5-phospho-beta-D-ribosyl)-5'-AMP + H2O = 1-(5-phospho-beta-D-ribosyl)-5-[(5-phospho-beta-D-ribosylamino)methylideneamino]imidazole-4-carboxamide. It functions in the pathway amino-acid biosynthesis; L-histidine biosynthesis; L-histidine from 5-phospho-alpha-D-ribose 1-diphosphate: step 3/9. Functionally, catalyzes the hydrolysis of the adenine ring of phosphoribosyl-AMP. This Cereibacter sphaeroides (strain ATCC 17023 / DSM 158 / JCM 6121 / CCUG 31486 / LMG 2827 / NBRC 12203 / NCIMB 8253 / ATH 2.4.1.) (Rhodobacter sphaeroides) protein is Phosphoribosyl-AMP cyclohydrolase.